The sequence spans 146 residues: Basic phospholipase A2 73 (146 aa).

An N-terminal signal peptide occupies residues 1-19 (MYPAHLLVLLAVCVSLLGA). Residues 20–27 (ASIPPLPL) constitute a propeptide that is removed on maturation. 7 cysteine pairs are disulfide-bonded: Cys38–Cys98, Cys54–Cys145, Cys56–Cys72, Cys71–Cys126, Cys78–Cys119, Cys87–Cys112, and Cys105–Cys117. The Ca(2+) site is built by Tyr55, Gly57, and Gly59. Residue His75 is part of the active site. Residue Asp76 participates in Ca(2+) binding. Asp120 is an active-site residue.

The protein belongs to the phospholipase A2 family. Group I subfamily. D49 sub-subfamily. Ca(2+) serves as cofactor. Expressed by the venom gland.

The protein localises to the secreted. The catalysed reaction is a 1,2-diacyl-sn-glycero-3-phosphocholine + H2O = a 1-acyl-sn-glycero-3-phosphocholine + a fatty acid + H(+). In terms of biological role, snake venom phospholipase A2 (PLA2) that inhibits neuromuscular transmission by blocking acetylcholine release from the nerve termini. PLA2 catalyzes the calcium-dependent hydrolysis of the 2-acyl groups in 3-sn-phosphoglycerides. The protein is Basic phospholipase A2 73 of Hydrophis hardwickii (Hardwick's spine-bellied seasnake).